An 891-amino-acid chain; its full sequence is DNA mismatch repair protein MutS (891 aa).

634–641 (GPNMGGKS) contacts ATP.

This sequence belongs to the DNA mismatch repair MutS family.

Its function is as follows. This protein is involved in the repair of mismatches in DNA. It is possible that it carries out the mismatch recognition step. This protein has a weak ATPase activity. This Burkholderia pseudomallei (strain 668) protein is DNA mismatch repair protein MutS.